Here is a 443-residue protein sequence, read N- to C-terminus: Ribosomal protein uS12 methylthiotransferase RimO (443 aa).

An MTTase N-terminal domain is found at 11–121 (PTVGFVSLGC…VMEAVHGALP (111 aa)). Residues cysteine 20, cysteine 56, cysteine 85, cysteine 152, cysteine 156, and cysteine 159 each contribute to the [4Fe-4S] cluster site. The Radical SAM core domain occupies 138-375 (LTPRHYAYLK…METQAEISAA (238 aa)). One can recognise a TRAM domain in the interval 378–443 (DAKIGRTIEV…DAHDLWATPV (66 aa)).

This sequence belongs to the methylthiotransferase family. RimO subfamily. [4Fe-4S] cluster serves as cofactor.

Its subcellular location is the cytoplasm. The catalysed reaction is L-aspartate(89)-[ribosomal protein uS12]-hydrogen + (sulfur carrier)-SH + AH2 + 2 S-adenosyl-L-methionine = 3-methylsulfanyl-L-aspartate(89)-[ribosomal protein uS12]-hydrogen + (sulfur carrier)-H + 5'-deoxyadenosine + L-methionine + A + S-adenosyl-L-homocysteine + 2 H(+). In terms of biological role, catalyzes the methylthiolation of an aspartic acid residue of ribosomal protein uS12. The polypeptide is Ribosomal protein uS12 methylthiotransferase RimO (Thiobacillus denitrificans (strain ATCC 25259 / T1)).